Reading from the N-terminus, the 376-residue chain is N-acetyldiaminopimelate deacetylase (376 aa).

Residue aspartate 69 is part of the active site. The Proton acceptor role is filled by glutamate 128.

It belongs to the peptidase M20A family. N-acetyldiaminopimelate deacetylase subfamily.

The catalysed reaction is N-acetyl-(2S,6S)-2,6-diaminopimelate + H2O = (2S,6S)-2,6-diaminopimelate + acetate. It participates in amino-acid biosynthesis; L-lysine biosynthesis via DAP pathway; LL-2,6-diaminopimelate from (S)-tetrahydrodipicolinate (acetylase route): step 3/3. Its function is as follows. Catalyzes the conversion of N-acetyl-diaminopimelate to diaminopimelate and acetate. This chain is N-acetyldiaminopimelate deacetylase, found in Bacillus anthracis (strain A0248).